The following is a 269-amino-acid chain: SF-assemblin (269 aa).

The tract at residues 1–23 (MSISPGRSFSPMRASGLTGITSA) is disordered. The segment at 1-24 (MSISPGRSFSPMRASGLTGITSAG) is nonhelical region. A rod region spans residues 25–269 (PTAKLEHVSE…LQEGLKLVST (245 aa)). Positions 98–144 (AERSAAQHVDMQNSLKQAVDSLSNRLQDLHSLVREEREQRRNDIEHL) form a coiled coil.

The protein belongs to the SF-assemblin family.

It localises to the cytoplasm. The protein localises to the cytoskeleton. In terms of biological role, major component of the striated microtubule-associated fibers (SMAFs; system-I-fibers). This is SF-assemblin from Chlamydomonas moewusii (Chlamydomonas eugametos).